We begin with the raw amino-acid sequence, 201 residues long: Peptidyl-tRNA hydrolase (201 aa).

Tyr15 contributes to the tRNA binding site. The active-site Proton acceptor is His20. Tyr66, Asn68, and Asn114 together coordinate tRNA.

It belongs to the PTH family. In terms of assembly, monomer.

It localises to the cytoplasm. It carries out the reaction an N-acyl-L-alpha-aminoacyl-tRNA + H2O = an N-acyl-L-amino acid + a tRNA + H(+). In terms of biological role, hydrolyzes ribosome-free peptidyl-tRNAs (with 1 or more amino acids incorporated), which drop off the ribosome during protein synthesis, or as a result of ribosome stalling. Catalyzes the release of premature peptidyl moieties from peptidyl-tRNA molecules trapped in stalled 50S ribosomal subunits, and thus maintains levels of free tRNAs and 50S ribosomes. The protein is Peptidyl-tRNA hydrolase of Burkholderia thailandensis (strain ATCC 700388 / DSM 13276 / CCUG 48851 / CIP 106301 / E264).